The following is a 471-amino-acid chain: Isochorismate synthase MenF (471 aa).

Lys-226 acts as the Proton acceptor in catalysis. Catalysis depends on Glu-275, which acts as the Proton donor. Mg(2+) is bound by residues Glu-319 and Glu-454.

This sequence belongs to the isochorismate synthase family. It depends on Mg(2+) as a cofactor.

The catalysed reaction is chorismate = isochorismate. The protein operates within quinol/quinone metabolism; 1,4-dihydroxy-2-naphthoate biosynthesis; 1,4-dihydroxy-2-naphthoate from chorismate: step 1/7. It participates in quinol/quinone metabolism; menaquinone biosynthesis. Catalyzes the conversion of chorismate to isochorismate. This chain is Isochorismate synthase MenF, found in Bacillus subtilis (strain 168).